Consider the following 274-residue polypeptide: Large ribosomal subunit protein uL2 (274 aa).

Disordered stretches follow at residues 28–54 (KPYA…TRHI) and 221–274 (RGTA…RTKK). Over residues 39-49 (KTGGRNNNGRI) the composition is skewed to polar residues.

This sequence belongs to the universal ribosomal protein uL2 family. Part of the 50S ribosomal subunit. Forms a bridge to the 30S subunit in the 70S ribosome.

Functionally, one of the primary rRNA binding proteins. Required for association of the 30S and 50S subunits to form the 70S ribosome, for tRNA binding and peptide bond formation. It has been suggested to have peptidyltransferase activity; this is somewhat controversial. Makes several contacts with the 16S rRNA in the 70S ribosome. The polypeptide is Large ribosomal subunit protein uL2 (Photorhabdus laumondii subsp. laumondii (strain DSM 15139 / CIP 105565 / TT01) (Photorhabdus luminescens subsp. laumondii)).